We begin with the raw amino-acid sequence, 147 residues long: MAIFARETMDLIATASFPSIKKLSSGFWLDLFESTLTSGNELVLLPPTRYSYWSIMAVANPTPLKAPRRLDLVTKSLLAAPLLFHLVCQSNNPVREDVLDCWVWPFFCSGNTALMKSPKFWALLGVGSKVVLPWLCPLLGSRNAGKA.

This is an uncharacterized protein from Mycoplasma pneumoniae (strain ATCC 29342 / M129 / Subtype 1) (Mycoplasmoides pneumoniae).